Consider the following 251-residue polypeptide: GTP cyclohydrolase 1 type 2 homolog (251 aa).

Residues His-62, His-63, Asp-103, His-215, and Glu-219 each coordinate a divalent metal cation.

This sequence belongs to the GTP cyclohydrolase I type 2/NIF3 family. As to quaternary structure, homohexamer.

The polypeptide is GTP cyclohydrolase 1 type 2 homolog (Mycoplasmopsis pulmonis (strain UAB CTIP) (Mycoplasma pulmonis)).